The following is a 198-amino-acid chain: tRNA (pseudouridine(54)-N(1))-methyltransferase (198 aa).

S-adenosyl-L-methionine is bound by residues Leu130, Gly153, 176–181, and Cys186; that span reads LSPLEL.

Belongs to the methyltransferase superfamily. TrmY family. In terms of assembly, homodimer.

The protein resides in the cytoplasm. The catalysed reaction is pseudouridine(54) in tRNA + S-adenosyl-L-methionine = N(1)-methylpseudouridine(54) in tRNA + S-adenosyl-L-homocysteine + H(+). In terms of biological role, specifically catalyzes the N1-methylation of pseudouridine at position 54 (Psi54) in tRNAs. In Methanococcus maripaludis (strain C6 / ATCC BAA-1332), this protein is tRNA (pseudouridine(54)-N(1))-methyltransferase.